The sequence spans 345 residues: Nuclear hormone receptor family nhr-176 (345 aa).

The segment at residues 7–82 (IQPCLVCGQS…AGMLEKMVFS (76 aa)) is a DNA-binding region (nuclear receptor). An NR C4-type zinc finger spans residues 10 to 30 (CLVCGQSSNSILFGAPSCRAC). The NR C4-type; degenerate zinc-finger motif lies at 46-65 (NNCLGECSFAKKSMKPCQSC). The NR LBD domain occupies 92 to 342 (FEKSILEELE…CPLYAISTNS (251 aa)). Residues 331–342 (SGCPLYAISTNS) are AF-2.

The protein resides in the nucleus. Its function is as follows. Nuclear hormone receptor. Binds to xenobiotic ligand thiabendazole (TBZ), in vitro. Involved in the up-regulation of phase I detoxification genes, such as probable cytochrome P450 cyp-35d1, in response to TBZ. This Caenorhabditis elegans protein is Nuclear hormone receptor family nhr-176.